The chain runs to 538 residues: Cytochrome P450 monooxygenase fogE (538 aa).

A helical membrane pass occupies residues 4-24; that stretch reads ASSAILLVALIAALWRLSLIG. C437 is a heme binding site.

Belongs to the cytochrome P450 family. It depends on heme as a cofactor.

The protein resides in the membrane. Its pathway is secondary metabolite biosynthesis. In terms of biological role, cytochrome P450 monooxygenase; part of the gene cluster that mediates the biosynthesis of flavoglaucin and congeners (including aspergin, dihydroauroglaucin and auroglaucin), prenylated salicylaldehyde derivatives carrying a saturated or an unsaturated C-7 side chain. The PKS fogA releases the carboxylic acid (8E,10E,12E)-3,5,7-trihydroxytetradeca-8,10,12-trienoic acid as its product, as well as derivatives with one and two double bonds. FogA is indeed able to reduce the initial triketide, thus being at least partially responsible for the differently saturated heptyl side chains of flavoglaucin congeners. The oxidoreductases fogB, fogC and fogD modify the nascent polyketide in fogA-bound form and, together, fogA, fogB, fogC and fogD are necessary for the formation of the aromatic core and the cyclized PKS products are released as salicyl alcohols. In particular, fogB is responsible for oxidation of a hydroxyl group or reduction of remaining double bond(s) at the C-7 residue whereas fogD is probably involved in the reductive release of the modified PKS products. The cytochrome P450 monooxygenase fogE is then responsible for the hydroxylation at C-3 of the benzene ring. The fogE products are substrates of the prenyltransferase fogH and the prenylated benzyl alcohols are subsequently oxidized by the fogF to produce the final aryl aldehydes flavoglaucin and congeners. The short-chain dehydrogenase fogG does not seem to be involved in the biosynthesis of the prenylated salicylaldehyde derivatives. This chain is Cytochrome P450 monooxygenase fogE, found in Aspergillus ruber (strain CBS 135680).